Here is a 475-residue protein sequence, read N- to C-terminus: Ribulose bisphosphate carboxylase large chain (475 aa).

Residues 1–2 constitute a propeptide that is removed on maturation; sequence MS. Pro-3 bears the N-acetylproline mark. Lys-14 is modified (N6,N6,N6-trimethyllysine). Positions 123 and 173 each coordinate substrate. Lys-175 acts as the Proton acceptor in catalysis. Position 177 (Lys-177) interacts with substrate. Positions 201, 203, and 204 each coordinate Mg(2+). Lys-201 carries the post-translational modification N6-carboxylysine. His-294 serves as the catalytic Proton acceptor. Arg-295, His-327, and Ser-379 together coordinate substrate.

Belongs to the RuBisCO large chain family. Type I subfamily. Heterohexadecamer of 8 large chains and 8 small chains; disulfide-linked. The disulfide link is formed within the large subunit homodimers. The cofactor is Mg(2+). The disulfide bond which can form in the large chain dimeric partners within the hexadecamer appears to be associated with oxidative stress and protein turnover.

Its subcellular location is the plastid. It localises to the chloroplast. The catalysed reaction is 2 (2R)-3-phosphoglycerate + 2 H(+) = D-ribulose 1,5-bisphosphate + CO2 + H2O. The enzyme catalyses D-ribulose 1,5-bisphosphate + O2 = 2-phosphoglycolate + (2R)-3-phosphoglycerate + 2 H(+). In terms of biological role, ruBisCO catalyzes two reactions: the carboxylation of D-ribulose 1,5-bisphosphate, the primary event in carbon dioxide fixation, as well as the oxidative fragmentation of the pentose substrate in the photorespiration process. Both reactions occur simultaneously and in competition at the same active site. The polypeptide is Ribulose bisphosphate carboxylase large chain (Stellaria media (Common chickweed)).